The following is a 271-amino-acid chain: MSIVVGQAYQHLPKQVSQNPDVGGWSFLQYFSEPKGIVQNREDDTKKTAYVYPIEKRSVAKLSLEMCTESLGTENGSDSGDEMSLLALEATNISKSPRLTTKPQKETSFMTRENSFPPPLNSVNGFNNSRMVKSYKEDGRLVVQAIRVCSPPRCFVSERREGRLRLCLSQNSLNSQDAEEEFEEEDEDDQYDAEEEEEEEEEEEEEEEEEEEEEEEEEEEDEEGIVGNNENFEGKSGNKKVSNRPKRRCNENGCEPKTMLNWKQQQFWVTT.

An FAF domain is found at 114–168 (NSFPPPLNSVNGFNNSRMVKSYKEDGRLVVQAIRVCSPPRCFVSERREGRLRLCL). A disordered region spans residues 174–255 (NSQDAEEEFE…KRRCNENGCE (82 aa)). Over residues 177–224 (DAEEEFEEEDEDDQYDAEEEEEEEEEEEEEEEEEEEEEEEEEEEDEEG) the composition is skewed to acidic residues. Positions 237–247 (GNKKVSNRPKR) are enriched in basic residues.

Belongs to the fantastic four family. In terms of tissue distribution, expressed in the shoot apex, stamens, anthers and young siliques. Detected in provascular and vascular tissue.

Functionally, able to repress WUS when constitutively overexpressed, but have no effect on CLV3. This is Protein FANTASTIC FOUR 1 (FAF1) from Arabidopsis thaliana (Mouse-ear cress).